Consider the following 2541-residue polypeptide: Talin-1 (2541 aa).

The FERM domain occupies 86–403; the sequence is RPLKIRMLDG…GYIDIILKKK (318 aa). T167 carries the post-translational modification Phosphothreonine. The tract at residues 280–435 is interaction with LAYN; that stretch reads FQAHKNCGQM…PKKSTVLQQQ (156 aa). Phosphoserine is present on residues S405, S425, S446, S620, and S729. Residues 482 to 655 form a helical bundle R1 region; sequence RGHMPPLTSA…QASGELLQQI (174 aa). The helical bundle R2 stretch occupies residues 656–786; that stretch reads GESDTDPHFQ…ALNELLQHVK (131 aa). The helical bundle R3 stretch occupies residues 787–911; the sequence is AHATGAGPAG…NAAAQNAIKK (125 aa). Positions 913–1044 are helical bundle R4; that stretch reads LVQRLEHAAK…RTAAQKAQEA (132 aa). At S1021 the chain carries Phosphoserine. Residues 1046-1206 form a helical bundle R5 region; the sequence is GPLEMDSALS…NRCVSCLPGQ (161 aa). A Phosphotyrosine modification is found at Y1116. T1142 is modified (phosphothreonine). Phosphoserine is present on residues S1201 and S1225. The segment at 1207–1357 is helical bundle R6; sequence RDVDNALRAV…QLITMCTQQA (151 aa). T1263 is subject to Phosphothreonine. Residues S1323 and S1328 each carry the phosphoserine modification. Residues 1327–1948 are interaction with SYNM; sequence ASPNLKSQLA…CSPSDVYTKK (622 aa). The segment at 1358–1453 is helical bundle R7A; Interaction with KANK1; that stretch reads PGQKECDNAL…AYLVGVSDPN (96 aa). The interval 1359–1659 is interaction with VCL and F-actin; it reads GQKECDNALR…SMRDKAPGQL (301 aa). The tract at residues 1461-1580 is helical bundle R8; that stretch reads LVEPTQFARA…NLSAFASNPE (120 aa). The residue at position 1544 (K1544) is an N6-acetyllysine. The tract at residues 1581 to 1653 is helical bundle R7B; Interaction with KANK1; the sequence is FSSVPAQISP…IKKLITSMRD (73 aa). The segment at 1655 to 1822 is helical bundle R9; it reads APGQLECETA…TLNEAASAAG (168 aa). A helical bundle R10 region spans residues 1823-1973; sequence VVGGMVDSIT…VLAALQAGNR (151 aa). S1849 bears the Phosphoserine mark. Position 1855 is a phosphothreonine (T1855). At S1878 the chain carries Phosphoserine. The tract at residues 1974-2140 is helical bundle R11; the sequence is GTQACITAAS…TVKAVEDEAT (167 aa). K2031 carries the post-translational modification N6-acetyllysine. At S2040 the chain carries Phosphoserine. K2115 carries the N6-acetyllysine modification. Residues 2141–2294 form a helical bundle R12 region; the sequence is KGTRALEATT…QAAEAMKGTE (154 aa). Residues 2293–2533 form the I/LWEQ domain; it reads TEWVDPEDPT…QIRQQQYKFL (241 aa). A helical bundle R13 region spans residues 2300-2482; that stretch reads DPTVIAENEL…AAQKAAAFED (183 aa).

Part of a complex composed of THSD1, PTK2/FAK1, TLN1 and VCL. Interacts with THSD1; this promotes interaction with PTK2/FAK1 and VCL. Interacts with NRAP and LAYN. Interacts with SYNM. Interacts with ITGB1; the interaction is prevented by competitive binding of ITGB1BP1. Binds with high affinity to VCL and with low affinity to integrins. Interacts with APBB1IP; this inhibits VCL binding. Interacts with PTK2/FAK1. Interacts with PIP5K1C. Interacts with F-actin. Interacts with SVEP1. Interacts (via R7 domain) with KANK1 or KANK2 (via KN motif); this interaction likely initiates the assembly of cortical microtubule stabilization complexes (CMSCs) at the vicinity of focal adhesions.

It is found in the cell projection. Its subcellular location is the ruffle membrane. It localises to the cytoplasm. The protein resides in the cytoskeleton. The protein localises to the cell surface. It is found in the cell junction. Its subcellular location is the focal adhesion. Its function is as follows. High molecular weight cytoskeletal protein concentrated at regions of cell-matrix and cell-cell contacts. Involved in connections of major cytoskeletal structures to the plasma membrane. With KANK1 co-organize the assembly of cortical microtubule stabilizing complexes (CMSCs) positioned to control microtubule-actin crosstalk at focal adhesions (FAs) rims. In Mus musculus (Mouse), this protein is Talin-1 (Tln1).